The following is a 542-amino-acid chain: uncharacterized protein (542 aa).

Asn-6 carries an N-linked (GlcNAc...) asparagine glycan. 8 consecutive transmembrane segments (helical) span residues 61-81 (FSTWATFSFAFSISGLFATVV), 95-115 (SAVWCWLIAGAGCMCIALSVA), 139-159 (SMPVVAWVVGWLNLLGQAAGV), 188-208 (HIVGVMAAVIVFHGLVNSLST), 217-237 (FYATFHLIVLVVCMICLLAKC), 255-275 (GWHPIGFSFLFGFLSVAWCMT), 298-318 (IALALSITYVLGWVFNIVLAF), and 348-368 (GSMAFTILSFIIINFTGITAM). N-linked (GlcNAc...) asparagine glycosylation occurs at Asn-394. 4 consecutive transmembrane segments (helical) span residues 402 to 422 (IAVWLNVVFCIALNLIGLGSI), 424 to 444 (AIEAIFSVCAIALDWSYVIPI), 469 to 489 (FVNAYAVCWTAFVSVIFLMPT), and 500 to 520 (YAVVVLAGVLLFSLVYWWSGA).

It belongs to the amino acid-polyamine-organocation (APC) superfamily.

The protein resides in the golgi apparatus. It localises to the membrane. This is an uncharacterized protein from Schizosaccharomyces pombe (strain 972 / ATCC 24843) (Fission yeast).